A 268-amino-acid polypeptide reads, in one-letter code: MGLSPSAPAVAVQASNASASPPSGCPMHEGKMKGCPVNTEPSGPTCEKKTYSVPAHQERAYEYVECPIRGTAAENKENLDPSNLMPPPNQTPAPDQPFALSTVREESSIPRADSEKKWVYPSEQMFWNAMLKKGWKWKDEDISQKDMYNIIRIHNQNNEQAWKEILKWEALHAAECPCGPSLIRFGGKAKEYSPRARIRSWMGYELPFDRHDWIINRCGTEVRYVIDYYDGGEVNKDYQFTILDVRPALDSLSAVWDRMKVAWWRWTS.

The segment covering 1–22 has biased composition (low complexity); it reads MGLSPSAPAVAVQASNASASPP. The interval 1–25 is disordered; sequence MGLSPSAPAVAVQASNASASPPSGC. Residue glycine 2 is the site of N-myristoyl glycine attachment. HRM repeat units lie at residues 24–29 and 34–39; these read GCPMHE and GCPVNT.

It belongs to the cytochrome c-type heme lyase family.

The protein resides in the mitochondrion inner membrane. It is found in the membrane. It carries out the reaction holo-[cytochrome c] = apo-[cytochrome c] + heme b. Its function is as follows. Lyase that catalyzes the covalent linking of the heme group to the cytochrome C apoprotein to produce the mature functional cytochrome. This is Holocytochrome c-type synthase from Homo sapiens (Human).